A 216-amino-acid polypeptide reads, in one-letter code: ATP phosphoribosyltransferase (216 aa).

It belongs to the ATP phosphoribosyltransferase family. Short subfamily. In terms of assembly, heteromultimer composed of HisG and HisZ subunits.

It localises to the cytoplasm. It carries out the reaction 1-(5-phospho-beta-D-ribosyl)-ATP + diphosphate = 5-phospho-alpha-D-ribose 1-diphosphate + ATP. It participates in amino-acid biosynthesis; L-histidine biosynthesis; L-histidine from 5-phospho-alpha-D-ribose 1-diphosphate: step 1/9. In terms of biological role, catalyzes the condensation of ATP and 5-phosphoribose 1-diphosphate to form N'-(5'-phosphoribosyl)-ATP (PR-ATP). Has a crucial role in the pathway because the rate of histidine biosynthesis seems to be controlled primarily by regulation of HisG enzymatic activity. This is ATP phosphoribosyltransferase from Prochlorococcus marinus (strain MIT 9211).